We begin with the raw amino-acid sequence, 345 residues long: Very-long-chain 3-oxoacyl-CoA reductase (345 aa).

A helical transmembrane segment spans residues 26 to 46 (GAAVLLATGGLFLASRVLTFV). Residues Val71, Asp125, Asp133, Asn152, Tyr219, Lys223, Ile252, and Ser254 each contribute to the NADP(+) site. Residue Tyr219 is the Proton donor of the active site. Lys223 functions as the Lowers pKa of active site Tyr in the catalytic mechanism.

Belongs to the short-chain dehydrogenases/reductases (SDR) family.

The protein localises to the endoplasmic reticulum membrane. It catalyses the reaction a very-long-chain (3R)-3-hydroxyacyl-CoA + NADP(+) = a very-long-chain 3-oxoacyl-CoA + NADPH + H(+). It participates in lipid metabolism; fatty acid biosynthesis. Its function is as follows. Component of the microsomal membrane bound fatty acid elongation system, which produces the 26-carbon very long-chain fatty acids (VLCFA) from palmitate. Catalyzes the reduction of the 3-ketoacyl-CoA intermediate that is formed in each cycle of fatty acid elongation. VLCFAs serve as precursors for ceramide and sphingolipids. In Aspergillus clavatus (strain ATCC 1007 / CBS 513.65 / DSM 816 / NCTC 3887 / NRRL 1 / QM 1276 / 107), this protein is Very-long-chain 3-oxoacyl-CoA reductase.